The chain runs to 335 residues: Eukaryotic translation initiation factor 3 subunit H-A (335 aa).

The 135-residue stretch at 22–156 (IQVDGLVVLK…LKAYRLTPKL (135 aa)) folds into the MPN domain. Low complexity predominate over residues 254–272 (QQQKQQYQQRRQQENAQRQ). A disordered region spans residues 254–282 (QQQKQQYQQRRQQENAQRQSRGEPPLPEE).

Belongs to the eIF-3 subunit H family. As to quaternary structure, component of the eukaryotic translation initiation factor 3 (eIF-3) complex, which is composed of 13 subunits: eif3a, eif3b, eif3c, eif3d, eif3e, eif3f, eif3g, eif3h, eif3i, eif3j, eif3k, eif3l and eif3m.

It localises to the cytoplasm. Component of the eukaryotic translation initiation factor 3 (eIF-3) complex, which is involved in protein synthesis of a specialized repertoire of mRNAs and, together with other initiation factors, stimulates binding of mRNA and methionyl-tRNAi to the 40S ribosome. The eIF-3 complex specifically targets and initiates translation of a subset of mRNAs involved in cell proliferation. This Danio rerio (Zebrafish) protein is Eukaryotic translation initiation factor 3 subunit H-A (eif3ha).